The chain runs to 515 residues: Histidine ammonia-lyase (515 aa).

The 5-imidazolinone (Ala-Gly) cross-link spans A148–G150. Residue S149 is modified to 2,3-didehydroalanine (Ser).

The protein belongs to the PAL/histidase family. Contains an active site 4-methylidene-imidazol-5-one (MIO), which is formed autocatalytically by cyclization and dehydration of residues Ala-Ser-Gly.

Its subcellular location is the cytoplasm. The enzyme catalyses L-histidine = trans-urocanate + NH4(+). The protein operates within amino-acid degradation; L-histidine degradation into L-glutamate; N-formimidoyl-L-glutamate from L-histidine: step 1/3. The protein is Histidine ammonia-lyase of Pseudomonas syringae pv. tomato (strain ATCC BAA-871 / DC3000).